Consider the following 458-residue polypeptide: ATP synthase subunit beta (458 aa).

148 to 155 contributes to the ATP binding site; it reads GGAGVGKT.

The protein belongs to the ATPase alpha/beta chains family. In terms of assembly, F-type ATPases have 2 components, CF(1) - the catalytic core - and CF(0) - the membrane proton channel. CF(1) has five subunits: alpha(3), beta(3), gamma(1), delta(1), epsilon(1). CF(0) has three main subunits: a(1), b(2) and c(9-12). The alpha and beta chains form an alternating ring which encloses part of the gamma chain. CF(1) is attached to CF(0) by a central stalk formed by the gamma and epsilon chains, while a peripheral stalk is formed by the delta and b chains.

It is found in the cell inner membrane. It catalyses the reaction ATP + H2O + 4 H(+)(in) = ADP + phosphate + 5 H(+)(out). In terms of biological role, produces ATP from ADP in the presence of a proton gradient across the membrane. The catalytic sites are hosted primarily by the beta subunits. In Mannheimia succiniciproducens (strain KCTC 0769BP / MBEL55E), this protein is ATP synthase subunit beta.